We begin with the raw amino-acid sequence, 453 residues long: AP-4 complex subunit mu-1 (453 aa).

Positions 184–452 (KNEVFLDVVE…LSHSDAYVIR (269 aa)) constitute an MHD domain.

The protein belongs to the adaptor complexes medium subunit family. Adaptor protein complex 4 (AP-4) is a heterotetramer composed of two large adaptins (epsilon-type subunit AP4E1 and beta-type subunit AP4B1), a medium adaptin (mu-type subunit AP4M1) and a small adaptin (sigma-type AP4S1). Interacts with tyrosine-based sorting signals on the cytoplasmic tail of cargo proteins such as APP, ATG9A, LAMP2 and NAGPA. Interacts with the C-terminal domain of GRID2. Interacts with GRIA1 and GRIA2; the interaction is indirect via CACNG3. Interacts with CACNG3; CACNG3 associates GRIA1 and GRIA2 with the adaptor protein complex 4 (AP-4) to target them to the somatodendritic compartment of neurons. Interacts with HOOK1 and HOOK2; the interactions are direct, mediate the interaction between FTS-Hook-FHIP (FHF) complex and AP-4 and the perinuclear distribution of AP-4. As to expression, ubiquitous. Highly expressed in testis and lowly expressed in brain and lung.

The protein resides in the golgi apparatus. It localises to the trans-Golgi network membrane. The protein localises to the early endosome. Functionally, component of the adaptor protein complex 4 (AP-4). Adaptor protein complexes are vesicle coat components involved both in vesicle formation and cargo selection. They control the vesicular transport of proteins in different trafficking pathways. AP-4 forms a non clathrin-associated coat on vesicles departing the trans-Golgi network (TGN) and may be involved in the targeting of proteins from the trans-Golgi network (TGN) to the endosomal-lysosomal system. It is also involved in protein sorting to the basolateral membrane in epithelial cells and the proper asymmetric localization of somatodendritic proteins in neurons. Within AP-4, the mu-type subunit AP4M1 is directly involved in the recognition and binding of tyrosine-based sorting signals found in the cytoplasmic part of cargos. The adaptor protein complex 4 (AP-4) may also recognize other types of sorting signal. The protein is AP-4 complex subunit mu-1 of Homo sapiens (Human).